Reading from the N-terminus, the 652-residue chain is Threonine--tRNA ligase (652 aa).

Residues 1–63 form the TGS domain; that stretch reads MAEISLTFPD…TESGDFQLIT (63 aa). Positions 246-545 are catalytic; sequence DHRVIGRDLD…LIEMYKGAFP (300 aa). Residues cysteine 340, histidine 391, and histidine 522 each coordinate Zn(2+).

Belongs to the class-II aminoacyl-tRNA synthetase family. As to quaternary structure, homodimer. The cofactor is Zn(2+).

It localises to the cytoplasm. It carries out the reaction tRNA(Thr) + L-threonine + ATP = L-threonyl-tRNA(Thr) + AMP + diphosphate + H(+). Catalyzes the attachment of threonine to tRNA(Thr) in a two-step reaction: L-threonine is first activated by ATP to form Thr-AMP and then transferred to the acceptor end of tRNA(Thr). Also edits incorrectly charged L-seryl-tRNA(Thr). This chain is Threonine--tRNA ligase, found in Leuconostoc mesenteroides subsp. mesenteroides (strain ATCC 8293 / DSM 20343 / BCRC 11652 / CCM 1803 / JCM 6124 / NCDO 523 / NBRC 100496 / NCIMB 8023 / NCTC 12954 / NRRL B-1118 / 37Y).